The primary structure comprises 199 residues: uncharacterized protein (199 aa).

The next 4 helical transmembrane spans lie at leucine 40–leucine 60, valine 86–phenylalanine 106, threonine 117–serine 137, and phenylalanine 166–leucine 186.

It localises to the membrane. This is an uncharacterized protein from Saccharomyces cerevisiae (strain ATCC 204508 / S288c) (Baker's yeast).